A 488-amino-acid chain; its full sequence is Palmitoleoyl-protein carboxylesterase notum1 (488 aa).

The first 20 residues, 1–20 (MAGALCVTLLLLLSTNTVSG), serve as a signal peptide directing secretion. Asn-90 carries an N-linked (GlcNAc...) asparagine glycan. Catalysis depends on charge relay system residues Ser-226, Asp-334, and His-383.

The protein belongs to the pectinacetylesterase family. Notum subfamily. As to expression, expressed in the egg and through cleavage to gastrulation stages. Enriched in the animal (prospective ectoderm) and dorsal regions in early gastrula. Shows a dynamic expression during embryogenesis, in particular during neural induction and antero-posterior (AP) patterning.

Its subcellular location is the secreted. It catalyses the reaction [Wnt protein]-O-(9Z)-hexadecenoyl-L-serine + H2O = [Wnt protein]-L-serine + (9Z)-hexadecenoate + H(+). Its function is as follows. Carboxylesterase that acts as a key negative regulator of the Wnt signaling pathway by specifically mediating depalmitoleoylation of WNT proteins. Serine palmitoleoylation of WNT proteins is required for efficient binding to frizzled receptors. Functions in the prospective ectoderm and is required for neural induction. The chain is Palmitoleoyl-protein carboxylesterase notum1 from Xenopus laevis (African clawed frog).